A 220-amino-acid chain; its full sequence is MAYRDQPLGELALSIPRASALFRKYDMDYCCGGKQTLARAAARKELDVEVIEAELAKLAEQPIEKDWRSAPLAEIIDHIIVRYHARHREQLPELILQATKVERVHADKPSVPKGLTKYLTMLHEELSSHMMKEEQILFPMIKQGMGSQAMGPISVMESEHDEAGELLEVIKHNTNNVTPPPEACTTWKAMYNGINELIDDLMDHISLENNVLFPRALAGE.

It belongs to the RIC family. YtfE subfamily. In terms of assembly, homodimer.

It localises to the cytoplasm. Di-iron-containing protein involved in the repair of iron-sulfur clusters damaged by oxidative and nitrosative stress conditions. The protein is Iron-sulfur cluster repair protein YtfE of Escherichia coli O157:H7.